Consider the following 90-residue polypeptide: Probable Fe(2+)-trafficking protein (90 aa).

It belongs to the Fe(2+)-trafficking protein family. As to quaternary structure, monomer.

Could be a mediator in iron transactions between iron acquisition and iron-requiring processes, such as synthesis and/or repair of Fe-S clusters in biosynthetic enzymes. The polypeptide is Probable Fe(2+)-trafficking protein (Enterobacter sp. (strain 638)).